Reading from the N-terminus, the 215-residue chain is Ribonuclease (215 aa).

An N-terminal signal peptide occupies residues 1–22 (MKKIVVLLGMLLAPWFSSAVQA). Catalysis depends on residues His62, Glu102, and His106. The segment at 144 to 166 (KPLPAQGGSGQCQRLAGPGQHHG) is disordered.

It belongs to the RNase T2 family.

It is found in the periplasm. The protein localises to the cytoplasm. One of the few RNases that cleave the phosphodiester bond between any two nucleotide. Shows a preference for adenylic acid. This is Ribonuclease from Aeromonas hydrophila.